The following is a 257-amino-acid chain: Acetylglutamate kinase (257 aa).

Substrate-binding positions include 41 to 42 (GG), arginine 63, and asparagine 158.

It belongs to the acetylglutamate kinase family. ArgB subfamily.

It localises to the cytoplasm. The enzyme catalyses N-acetyl-L-glutamate + ATP = N-acetyl-L-glutamyl 5-phosphate + ADP. The protein operates within amino-acid biosynthesis; L-arginine biosynthesis; N(2)-acetyl-L-ornithine from L-glutamate: step 2/4. Its function is as follows. Catalyzes the ATP-dependent phosphorylation of N-acetyl-L-glutamate. The sequence is that of Acetylglutamate kinase from Phocaeicola vulgatus (strain ATCC 8482 / DSM 1447 / JCM 5826 / CCUG 4940 / NBRC 14291 / NCTC 11154) (Bacteroides vulgatus).